A 113-amino-acid chain; its full sequence is UPF0122 protein LSEI_1603 (113 aa).

This sequence belongs to the UPF0122 family.

Might take part in the signal recognition particle (SRP) pathway. This is inferred from the conservation of its genetic proximity to ftsY/ffh. May be a regulatory protein. The chain is UPF0122 protein LSEI_1603 from Lacticaseibacillus paracasei (strain ATCC 334 / BCRC 17002 / CCUG 31169 / CIP 107868 / KCTC 3260 / NRRL B-441) (Lactobacillus paracasei).